The following is a 192-amino-acid chain: Large ribosomal subunit protein uL5 (192 aa).

It belongs to the universal ribosomal protein uL5 family. In terms of assembly, part of the 50S ribosomal subunit; contacts the 5S rRNA and probably tRNA. Forms a bridge to the 30S subunit in the 70S ribosome.

Functionally, this is one of the proteins that bind and probably mediate the attachment of the 5S RNA into the large ribosomal subunit, where it forms part of the central protuberance. In the 70S ribosome it contacts protein S13 of the 30S subunit (bridge B1b), connecting the 2 subunits; this bridge is implicated in subunit movement. May contact the P site tRNA; the 5S rRNA and some of its associated proteins might help stabilize positioning of ribosome-bound tRNAs. The protein is Large ribosomal subunit protein uL5 of Aeropyrum pernix (strain ATCC 700893 / DSM 11879 / JCM 9820 / NBRC 100138 / K1).